The primary structure comprises 451 residues: Bifunctional protein GlmU (451 aa).

Residues 1–232 (MTARSSLTIV…EDEVRGINTK (232 aa)) are pyrophosphorylase. UDP-N-acetyl-alpha-D-glucosamine-binding positions include 11 to 14 (LAAG), Lys25, Gln78, and 83 to 84 (GT). Mg(2+) is bound at residue Asp108. Residues Gly144, Glu158, Asn173, and Asn230 each coordinate UDP-N-acetyl-alpha-D-glucosamine. A Mg(2+)-binding site is contributed by Asn230. A linker region spans residues 233–253 (AQLAEAESVMQARLRKAAMEA). The segment at 254 to 451 (GVTLIAPETV…MKTRGKKPEK (198 aa)) is N-acetyltransferase. Residues Arg319 and Lys337 each contribute to the UDP-N-acetyl-alpha-D-glucosamine site. His349 (proton acceptor) is an active-site residue. UDP-N-acetyl-alpha-D-glucosamine-binding residues include Tyr352 and Asn363. Acetyl-CoA-binding positions include Ala366, 372-373 (NY), Ser409, and Arg426.

In the N-terminal section; belongs to the N-acetylglucosamine-1-phosphate uridyltransferase family. It in the C-terminal section; belongs to the transferase hexapeptide repeat family. Homotrimer. It depends on Mg(2+) as a cofactor.

Its subcellular location is the cytoplasm. It carries out the reaction alpha-D-glucosamine 1-phosphate + acetyl-CoA = N-acetyl-alpha-D-glucosamine 1-phosphate + CoA + H(+). It catalyses the reaction N-acetyl-alpha-D-glucosamine 1-phosphate + UTP + H(+) = UDP-N-acetyl-alpha-D-glucosamine + diphosphate. Its pathway is nucleotide-sugar biosynthesis; UDP-N-acetyl-alpha-D-glucosamine biosynthesis; N-acetyl-alpha-D-glucosamine 1-phosphate from alpha-D-glucosamine 6-phosphate (route II): step 2/2. The protein operates within nucleotide-sugar biosynthesis; UDP-N-acetyl-alpha-D-glucosamine biosynthesis; UDP-N-acetyl-alpha-D-glucosamine from N-acetyl-alpha-D-glucosamine 1-phosphate: step 1/1. It participates in bacterial outer membrane biogenesis; LPS lipid A biosynthesis. Catalyzes the last two sequential reactions in the de novo biosynthetic pathway for UDP-N-acetylglucosamine (UDP-GlcNAc). The C-terminal domain catalyzes the transfer of acetyl group from acetyl coenzyme A to glucosamine-1-phosphate (GlcN-1-P) to produce N-acetylglucosamine-1-phosphate (GlcNAc-1-P), which is converted into UDP-GlcNAc by the transfer of uridine 5-monophosphate (from uridine 5-triphosphate), a reaction catalyzed by the N-terminal domain. In Bradyrhizobium diazoefficiens (strain JCM 10833 / BCRC 13528 / IAM 13628 / NBRC 14792 / USDA 110), this protein is Bifunctional protein GlmU.